Consider the following 205-residue polypeptide: MARSGRYKVPFRRRREGLTNYRKRRKLLLSKKPRLVVRKTNKHIIAQIVVAKPQGDVTIVGADTRILAKFGWRGDENNVAAAYLLGLVVGYKARARRVEEAILDIGLHRPAPGARVFAVLKGALDAGLKIPHGEEVLPDEDRIKGKHVAEYAEKLKEENPEAYKARFSRYLQRGLEPEKLPEHFEEVKKKIVEYYEKKLAKVAAQ.

This sequence belongs to the universal ribosomal protein uL18 family. As to quaternary structure, part of the 50S ribosomal subunit. Contacts the 5S and 23S rRNAs.

Its function is as follows. This is one of the proteins that bind and probably mediate the attachment of the 5S RNA into the large ribosomal subunit, where it forms part of the central protuberance. This Pyrobaculum aerophilum (strain ATCC 51768 / DSM 7523 / JCM 9630 / CIP 104966 / NBRC 100827 / IM2) protein is Large ribosomal subunit protein uL18.